A 679-amino-acid polypeptide reads, in one-letter code: Protein white (679 aa).

A disordered region spans residues 1-34 (MGQEDQEVLIRGGKATSTSAESLNNNNEQPYEQS). Over residues 15-34 (ATSTSAESLNNNNEQPYEQS) the composition is skewed to polar residues. The region spanning 84 to 332 (NRVKGVFCNE…FSYIGATCPT (249 aa)) is the ABC transporter domain. Residue 121 to 128 (GSSGAGKT) participates in ATP binding. 5 helical membrane-spanning segments follow: residues 427-445 (LLQTTMVAVLIGLIFLGQQ), 457-477 (AIFLFLTNMTFQNSFATITVF), 507-525 (LPLFLVVPFLFTAIAYPLI), 534-555 (FFTALALVTLVANVSTSFGYLI), and 568-586 (VGPPVIIPFLLFGGFFLNS). Asn-628 and Asn-643 each carry an N-linked (GlcNAc...) asparagine glycan. Residues 651 to 670 (FDFIGLALLIVGFRISAYIA) traverse the membrane as a helical segment.

Belongs to the ABC transporter superfamily. ABCG family. Eye pigment precursor importer (TC 3.A.1.204) subfamily.

The protein localises to the membrane. Its function is as follows. May be part of a membrane-spanning permease system necessary for the transport of pigment precursors into pigment cells responsible for eye color. This is Protein white (W) from Ceratitis capitata (Mediterranean fruit fly).